A 319-amino-acid chain; its full sequence is MMKVLFIADPMASFKTYKDTTYAMMREMAKRGWRLFHTLSGELSVNGGLVTAQASAFEFLGAKNDDDHAWFKSADKVQTALEAFDAVIMRTDPPFDMQYLYATQLLTLAEQQGAKVFNSGQAMRDFNEKLAILNFSRFIAPTLVTTRSADVRTFLKEHGDIIIKPLDGMGGMGIFRLTEKDPNIGSILETLMQLDSRTIMAQRYIPEIVHGDKRILIIGGEVVPYALARIPQNGETRGNLAAGGRGVAQELGGRDREIAETLAPELKRRGILLAGLDVIGSNLTEVNVTSPTGFQEIMKQKGFDVAAMFADAVAAWSVR.

The region spanning 129 to 314 (KLAILNFSRF…VAAMFADAVA (186 aa)) is the ATP-grasp domain. Position 155-211 (155-211 (LKEHGDIIIKPLDGMGGMGIFRLTEKDPNIGSILETLMQLDSRTIMAQRYIPEIVHG)) interacts with ATP. 2 residues coordinate Mg(2+): Glu-285 and Asn-287.

This sequence belongs to the prokaryotic GSH synthase family. The cofactor is Mg(2+). Mn(2+) is required as a cofactor.

It catalyses the reaction gamma-L-glutamyl-L-cysteine + glycine + ATP = glutathione + ADP + phosphate + H(+). It participates in sulfur metabolism; glutathione biosynthesis; glutathione from L-cysteine and L-glutamate: step 2/2. The polypeptide is Glutathione synthetase (Neisseria meningitidis serogroup B (strain ATCC BAA-335 / MC58)).